We begin with the raw amino-acid sequence, 482 residues long: MSDAPIIAVVMAGGTGSRLWPLSRELYPKQFLQLSGDNTLLQTTLLRLSGLSCQKPLVITNEQHRFVVAEQLREINKLNGNIILEPCGRNTAPAIAISAFHALKRNPQEDPLLLVLAADHVIAKESVFCDAIKNATPIANQGKIVTFGIIPEYAETGYGYIERGELSVPLQGHENTGFYYVNKFVEKPNRETAELYMTSGNHYWNSGIFMFKASVYLEELRKFRPDIYNVCEQVASSSYIDLDFIRLSKEQFQDCPAESIDFAVMEKTEKCVVCPVDIGWSDVGSWQSLWDISLKSKTGDVCKGDILTYDTKNNYIYSESALVAAIGIEDMVIVQTKDAVLVSKKSDVQHVKKIVEMLKLQQRTEYISHREVFRPWGKFDSIDQGERYKVKKIIVKPGEGLSLRMHHHRSEHWIVLSGTAKVTLGDKTKLVTANESIYIPLGAAYSLENPGIIPLNLIEVSSGDYLGEDDIIRQKERYKHED.

Belongs to the mannose-6-phosphate isomerase type 2 family.

It carries out the reaction alpha-D-mannose 1-phosphate + GTP + H(+) = GDP-alpha-D-mannose + diphosphate. It participates in nucleotide-sugar biosynthesis; GDP-alpha-D-mannose biosynthesis; GDP-alpha-D-mannose from alpha-D-mannose 1-phosphate (GTP route): step 1/1. Functionally, involved in GDP-mannose biosynthesis which serves as the activated sugar nucleotide precursor for mannose residues in cell surface polysaccharides. This enzyme participates in synthesis of the LPS O antigen. The chain is Mannose-1-phosphate guanylyltransferase 2 (manC2) from Escherichia coli O157:H7.